Here is a 230-residue protein sequence, read N- to C-terminus: MRKPSITITTAKAIITPDYTLIKSHSKYQLPSRFQKLDADSPERSTVVKLFYRRFMRLKPFISNVKMVKDTYRDYVRYKFMKENYELKRYLVFNPDGLRSKIKLELLSNTKCCERILPVTEMQRTLEFVLKSCSYLPETKVQKWDIARDNTYCRQILKNLLTMQYEKYRSILHRGIGHDELDVKFSHLKTTSSPLTKLNKTEKKKIPLFKVFSDFDTTLIYLNETLGTRL.

It belongs to the IRC19 family.

In terms of biological role, involved in sporulation and maintenance of the mitochondrial DNA. Is probably involved in a pathway contributing to genomic integrity. The protein is Increased recombination centers protein 19 (IRC19) of Saccharomyces cerevisiae (strain JAY291) (Baker's yeast).